A 124-amino-acid polypeptide reads, in one-letter code: Tax1-binding protein 3 (124 aa).

Ser2 is subject to N-acetylserine. One can recognise a PDZ domain in the interval Arg15–Gln112. At Ser61 the chain carries Phosphoserine.

Interacts (via its PDZ domain) with GLS2. Interacts (via its PDZ domain) with RTKN (via the C-terminal region); this interaction facilitates Rho-mediated activation of the FOS serum response element (SRE). Interacts (via its PDZ domain) with CTNNB1; this interaction inhibits the transcriptional activity of CTNNB1. Interacts with HTLV-1 TAX protein. Interacts (via PDZ domain) with ARHGEF16. Interacts (via PDZ domain) with KCNJ4 (via C-terminus). Competes with LIN7A for KCNJ4 binding. Interacts with ADGRB2. Ubiquitous. Detected in brain, heart, kidney, lung, small intestine and skeletal muscle. Detected in various cell lines including HeLa. Weakly expressed in peripheral blood leukocytes.

Its subcellular location is the cytoplasm. The protein resides in the nucleus. The protein localises to the cell membrane. Its function is as follows. May regulate a number of protein-protein interactions by competing for PDZ domain binding sites. Binds CTNNB1 and may thereby act as an inhibitor of the Wnt signaling pathway. Competes with LIN7A for KCNJ4 binding, and thereby promotes KCNJ4 internalization. May play a role in the Rho signaling pathway. May play a role in activation of CDC42 by the viral protein HPV16 E6. This Homo sapiens (Human) protein is Tax1-binding protein 3.